Here is a 916-residue protein sequence, read N- to C-terminus: Neurofilament medium polypeptide (916 aa).

A compositionally biased stretch (polar residues) spans 1-10; the sequence is MSYTLDSLGN. A disordered region spans residues 1–51; that stretch reads MSYTLDSLGNPSAYRRVTETRSSFSRVSGSPSSGFRSQSWSRGSPSTVSSS. N-acetylserine is present on S2. The head stretch occupies residues 2-104; sequence SYTLDSLGNP…KLSRSNEKEQ (103 aa). The segment covering 21–44 has biased composition (low complexity); that stretch reads RSSFSRVSGSPSSGFRSQSWSRGS. Position 30 is a phosphoserine (S30). R42 bears the Omega-N-methylarginine mark. T47 carries an O-linked (GlcNAc) threonine glycan. S99 carries the post-translational modification Phosphoserine. In terms of domain architecture, IF rod spans 101–412; it reads EKEQLQGLND…KLLEGEETRF (312 aa). A coil 1A region spans residues 105–136; it reads LQGLNDRFAGYIEKVHYLEQQNKEIEAEIQAL. The interval 137–149 is linker 1; it reads RQKQASHAQLGDA. Residues 150 to 248 are coil 1B; sequence YDQEIRELRA…EEEVADLLAQ (99 aa). S226 is subject to Phosphoserine. The linker 12 stretch occupies residues 249–265; sequence IQASHITVERKDYLKTD. The segment at 266-287 is coil 2A; it reads ISTALKEIRSQLESHSDQNMHQ. The segment at 288-291 is linker 2; that stretch reads AEEW. The tract at residues 292-412 is coil 2B; it reads FKCRYAKLTE…KLLEGEETRF (121 aa). Y320 carries the post-translational modification Phosphotyrosine. A phosphoserine mark is found at S346 and S418. Positions 413 to 916 are tail; that stretch reads STFAGSITGP…AIVKEVTQSD (504 aa). T431 carries an O-linked (GlcNAc) threonine glycan. 2 positions are modified to phosphoserine: S467 and S483. A disordered region spans residues 485–851; it reads KEEKKEAAEE…KKGGDKSEEK (367 aa). Acidic residues predominate over residues 493–505; that stretch reads EEKEEEPEAEEEE. Position 511 is a phosphoserine (S511). Positions 521 to 541 are enriched in acidic residues; it reads KEEEGEKEEEEGQEEEEEEDE. Over residues 542–561 the composition is skewed to basic and acidic residues; the sequence is GAKSDQAEEGGSEKEGSSEK. Phosphoserine occurs at positions 545, 553, 558, and 559. Positions 562–582 are enriched in acidic residues; it reads EEGEQEEGETEAEAEGEEAEA. A Phosphothreonine modification is found at T571. Basic and acidic residues predominate over residues 583-614; it reads KEEKKVEEKSEEVATKEELVADAKVEKPEKAK. A run of 6 repeats spans residues 614–626, 627–639, 640–652, 653–665, 666–678, and 679–691. The segment at 614–691 is 6 X 13 AA approximate tandem repeats of K-S-P-V-[PS]-K-S-P-V-E-E-[KA]-[GAK]; that stretch reads KSPVPKSPVE…VPKSPVEEAK (78 aa). Phosphoserine occurs at positions 641 and 646. 2 positions are modified to phosphoserine: S680 and S685. Composition is skewed to basic and acidic residues over residues 686-701, 707-742, and 755-778; these read PVEE…KGEQ, KEVK…KEEA, and VHLE…EKAG. S736 is modified (phosphoserine). Phosphoserine occurs at positions 783, 821, and 837. Residues 788–828 show a composition bias toward basic and acidic residues; the sequence is SDKGAKGSRKEDIAVNGEVEGKEEVEQETKEKGSGREEEKG. Basic and acidic residues predominate over residues 839–851; that stretch reads ADEKKGGDKSEEK.

Belongs to the intermediate filament family. In terms of assembly, forms heterodimers with NEFL; which can further hetero-oligomerize (in vitro). Forms heterodimers with INA (in vitro). In terms of processing, there are a number of repeats of the tripeptide K-S-P, NFM is phosphorylated on a number of the serines in this motif. It is thought that phosphorylation of NFM results in the formation of interfilament cross bridges that are important in the maintenance of axonal caliber. Phosphorylation seems to play a major role in the functioning of the larger neurofilament polypeptides (NF-M and NF-H), the levels of phosphorylation being altered developmentally and coincidentally with a change in the neurofilament function. Post-translationally, phosphorylated in the head and rod regions by the PKC kinase PKN1, leading to the inhibition of polymerization.

Its subcellular location is the cytoplasm. The protein localises to the cytoskeleton. The protein resides in the cell projection. It is found in the axon. Its function is as follows. Neurofilaments usually contain three intermediate filament proteins: NEFL, NEFM, and NEFH which are involved in the maintenance of neuronal caliber. May additionally cooperate with the neuronal intermediate filament proteins PRPH and INA to form neuronal filamentous networks. This Homo sapiens (Human) protein is Neurofilament medium polypeptide (NEFM).